Here is a 655-residue protein sequence, read N- to C-terminus: Epithelial sodium channel subunit alpha (655 aa).

The Cytoplasmic segment spans residues 1–55 (MTDKEEEAEGGKKKEPMIGFYDSYQELFEFFCNNTTIHGTIRMVCSKHNNMKTVS). The helical transmembrane segment at 56 to 76 (WTILFITTFGVMYWQFGLLLG) threads the bilayer. At 77-531 (QYYSYPVSIT…SQWSLWFGSS (455 aa)) the chain is on the extracellular side. Intrachain disulfides connect Cys-102-Cys-275, Cys-199-Cys-206, Cys-252-Cys-259, Cys-364-Cys-448, Cys-385-Cys-425, Cys-385-Cys-444, Cys-389-Cys-440, Cys-398-Cys-425, Cys-398-Cys-448, and Cys-400-Cys-414. Residues 532–552 (VLSVVEMGELVFDLIAVGVIV) form a helical membrane-spanning segment. At 553–655 (LRRRRREKCQ…QEASEGPTVL (103 aa)) the chain is on the cytoplasmic side. Positions 561 to 587 (CQASSDGEGTSDSTAGTHRGQENASRS) are disordered. Positions 562–586 (QASSDGEGTSDSTAGTHRGQENASR) are enriched in polar residues.

It belongs to the amiloride-sensitive sodium channel (TC 1.A.6) family. SCNN1A subfamily. Heterotrimer; containing an alpha/SCNN1A, a beta/SCNN1B and a gamma/SCNN1G subunit. As to expression, strongly expressed in gill, kidney and rectum (at protein level). More weakly expressed in muscle, brain, heart, liver and intestine.

Its subcellular location is the apical cell membrane. It is found in the cell projection. The protein resides in the cilium. The protein localises to the cytoplasmic granule. It localises to the cytoplasm. Its subcellular location is the cytoplasmic vesicle. It is found in the secretory vesicle. The protein resides in the acrosome. The protein localises to the flagellum. It carries out the reaction Na(+)(in) = Na(+)(out). Originally identified and characterized by its inhibition by the diuretic drug amiloride. Functionally, this is one of the three pore-forming subunits of the heterotrimeric epithelial sodium channel (ENaC), a critical regulator of sodium balance and fluid homeostasis. ENaC operates in epithelial tissues, where it mediates the electrodiffusion of sodium ions from extracellular fluid through the apical membrane of cells, with water following osmotically. The chain is Epithelial sodium channel subunit alpha (scnn1a) from Neoceratodus forsteri (Australian lungfish).